A 127-amino-acid polypeptide reads, in one-letter code: Glycine cleavage system H protein (127 aa).

One can recognise a Lipoyl-binding domain in the interval 24-106; the sequence is TVTVGITDHA…FEGAWIAKIK (83 aa). Lys65 bears the N6-lipoyllysine mark.

It belongs to the GcvH family. The glycine cleavage system is composed of four proteins: P, T, L and H. (R)-lipoate serves as cofactor.

The glycine cleavage system catalyzes the degradation of glycine. The H protein shuttles the methylamine group of glycine from the P protein to the T protein. This chain is Glycine cleavage system H protein, found in Marinomonas sp. (strain MWYL1).